Here is an 898-residue protein sequence, read N- to C-terminus: MTSRKRSPHDFIFKEELGHGSYSTVFKALDKKSPNKIYAIKVCSKKHIIKEAKVKYVTIEKNTMNLLAQKHHAGIIKLYYTFHDEENLYFVLDFAPGGELLSLLHKMGTFNDIWTRHFTAQLIDALEFIHSHGIIHRDLKPENVLLDRDGRLMITDFGAAATIDPSLSGDSAKFNSDSNGSKDNQNCASFVGTAEYVSPELLLYNQCGYGSDIWALGCMIYQFVQGQPPFRGENELKTFEKIVALDYPWGPNNRINNSTSPINPLVINLVQKILVIEVNERISLEQIKRHPYFSKVDWNDKIKIWRGIWQSQGQSLQQTTLGLPNIPQNILPTRQLHVIDTPARSIQITKQKRKKPTKISNTTSSIVVWRKRLGISTGKDDLGTVPSTTPAVTAPNDTNVLTNTAAHSTANIALPPNSQSNQVKRAQLVAPNRIPPKVPVINDNVRNKSIPRTKPNVPPLQTSSIPQKLSTSSASSALSAPSTEIRNQDLTHTLDGRNSIDIHVLKQDYVFIYGIPYEHEGPAMSLNSYNKIDNDLITSLVAQHKEELKNSESFLQVLTLKKSGMLSYKNTVMEGNDDQENKEHQMANIEDTDLSMYDFEFNELTRKGFLILEKYKNRIWFISLPSYSTLSKIPFNAVKSSTINNNENWVDCFFRARQLLEEKQILDKISNVSFDSKASSEPSSPPPISRKERPLSIGNNVTTLSYTAKNGSQNNAPQNDNVGEEKPFRIPSSTKDRPGANSTPSSRHPRVLSSNNAGETPKKMNGRLPNSAPSTNTYTNGSVPAFNHRPSTNVGNNKHNILTSKKQGSSVFSPSSSTTKPQIKTTGYRQPTPSPPLPQMEFPTTREKYSAPSNMVISSSRYEVLHTLNNSQTNFDREIASRGASAAFRSLQKSKKKK.

A Protein kinase domain is found at 11 to 293; sequence FIFKEELGHG…LEQIKRHPYF (283 aa). ATP is bound by residues 17–25 and lysine 41; that span reads LGHGSYSTV. Aspartate 138 functions as the Proton acceptor in the catalytic mechanism. Disordered regions lie at residues 435–484 and 675–850; these read PPKV…PSTE and DSKA…EKYS. Positions 459–468 are enriched in polar residues; that stretch reads PLQTSSIPQK. Residues 469–483 show a composition bias toward low complexity; sequence LSTSSASSALSAPST. Residue serine 696 is modified to Phosphoserine. The segment covering 697 to 721 has biased composition (polar residues); it reads IGNNVTTLSYTAKNGSQNNAPQNDN. Positions 723–738 are enriched in basic and acidic residues; it reads GEEKPFRIPSSTKDRP. Composition is skewed to polar residues over residues 740 to 758, 771 to 782, and 789 to 803; these read ANST…NNAG, SAPSTNTYTNGS, and RPST…NILT. A Phosphoserine modification is found at serine 753. A compositionally biased stretch (low complexity) spans 804–817; the sequence is SKKQGSSVFSPSSS. Polar residues predominate over residues 818 to 831; that stretch reads TTKPQIKTTGYRQP. Serine 871 carries the phosphoserine modification.

The protein belongs to the protein kinase superfamily. Ser/Thr protein kinase family.

It carries out the reaction L-seryl-[protein] + ATP = O-phospho-L-seryl-[protein] + ADP + H(+). The enzyme catalyses L-threonyl-[protein] + ATP = O-phospho-L-threonyl-[protein] + ADP + H(+). Serine/threonine-protein kinase which may phosphorylate the same targets substrates as PKH1 and PKH2, 2 upstream activators of PKC1. The polypeptide is Serine/threonine-protein kinase PKH3 (PKH3) (Saccharomyces cerevisiae (strain ATCC 204508 / S288c) (Baker's yeast)).